An 871-amino-acid chain; its full sequence is MYAGAGPVLVPPTPTPPLPMPAYTFKPPPRPDFGTSGRTIKLQANFFEMDIPKIEIYHYEIDIKPEKCPRRVNREIVEHMVQHFKAQIFGDRKPVFDGRKNLYTAMPLPIARDKQVELEVTLPGEGKDRIFKVAIKWMACVSLQALHDALSGRLPSVPFETIQALDVVMRHLPSMRYTPVGRSFFTASEGCANPLGGGREVWFGFHQSVRPSLWKMMLNIDVSATAFYKAQPVIEFMCEVLDFKSIEEQQKPLTDSQRVKFTKEIKGLKVEITHCGQMKRKYRVCNVTRRPASHQTFPLQQESGQTVECTVAQYFKDRHKLVLRYPHLPCLQVGQEQKHTYLPLEVCNIVAGQRCIKKLTDNQTSTMIRATARSAPDRQEEISKLMRSASFNTDPFVREFGIMVKDDMTDVTGRVLQPPSILYGGRVWEEPNAPLNKAIATPVQGVWDMRNKQFHTGIEIKVWAIACFAPQRQCTEVHLKTFTEQLRKISRDAGMPIQGQPCFCKYAQGADSVEPMFRHLKNTYTGLQLVVVILPGKTPVYAEVKRVGDTVLGMATQCVQMKNVQRTTPQTLSNLCLKINVKLGGVNNILLPQGRPPVFQQPVIFLGADVTHPPAGDGKKPSIAAVVGSMDAHPNRYCATVRVQQHRQEIIQDLSAMVRELLIQFYKSTRFKPTRIIFYRDGVSEGQFQQVLHHELLAIREACIKLEKDYQPGITFIVVQKRHHTRLFCTDRNERVGKSGNIPAGTTVDTKITHPSEFDFYLCSHAGIQGTSRPSHYHVLWDDNRFSSDELQILTYQLCHTYVRCTRSVSIPAPAYYAHLVAFRARYHLVDKEHDSAEGSHTSGQSNGRDQQALAKAVQVHQDTLRTMYFA.

Positions 232 to 351 (PVIEFMCEVL…LPLEVCNIVA (120 aa)) constitute a PAZ domain. Interaction with guide RNA regions lie at residues 314–319 (YFKDRH) and 536–578 (GKTP…LCLK). The Piwi domain maps to 529 to 830 (LVVVILPGKT…VAFRARYHLV (302 aa)). The interval 599-602 (FQQP) is interaction with GW182 family members. Residue D609 participates in a divalent metal cation binding. The interval 662-672 (LIQFYKSTRFK) is interaction with GW182 family members. An a divalent metal cation-binding site is contributed by D681. Interaction with guide RNA regions lie at residues 721-722 (KR), 765-773 (HAGIQGTSR), and 802-824 (YVRCTRSVSIPAPAYYAHLVAFR). H819 serves as a coordination point for a divalent metal cation. Positions 834–856 (HDSAEGSHTSGQSNGRDQQALAK) are disordered. A compositionally biased stretch (polar residues) spans 839–850 (GSHTSGQSNGRD).

The protein belongs to the argonaute family. Ago subfamily. As to quaternary structure, component of the RISC loading complex (RLC), or micro-RNA (miRNA) loading complex (miRLC), which is composed of dicer1, ago2 and tarbp2. Note that the trimeric RLC/miRLC is also referred to as RISC. It depends on Mg(2+) as a cofactor. Requires Mn(2+) as cofactor.

It is found in the cytoplasm. Its subcellular location is the P-body. The catalysed reaction is Endonucleolytic cleavage to 5'-phosphomonoester.. Its function is as follows. Required for RNA-mediated gene silencing (RNAi) by the RNA-induced silencing complex (RISC). The 'minimal RISC' appears to include ago2 bound to a short guide RNA such as a microRNA (miRNA) or short interfering RNA (siRNA). These guide RNAs direct RISC to complementary mRNAs that are targets for RISC-mediated gene silencing. The precise mechanism of gene silencing depends on the degree of complementarity between the miRNA or siRNA and its target. Binding of RISC to a perfectly complementary mRNA generally results in silencing due to endonucleolytic cleavage of the mRNA specifically by ago2. Binding of RISC to a partially complementary mRNA results in silencing through inhibition of translation, and this is independent of endonuclease activity. The inhibition of translational initiation leads to the accumulation of the affected mRNA in cytoplasmic processing bodies (P-bodies), where mRNA degradation may subsequently occur. This chain is Protein argonaute-2 (ago2), found in Xenopus tropicalis (Western clawed frog).